Here is a 354-residue protein sequence, read N- to C-terminus: G-protein coupled estrogen receptor 1 (354 aa).

Residues 1 to 40 (MEEQTTSLVWIYVNSTEQLNTSYEYNTTYLIEDSDKYQSY) are Extracellular-facing. The helical transmembrane segment at 41-61 (VIGLFLSCLYTILLFPIGFIG) threads the bilayer. The Cytoplasmic portion of the chain corresponds to 62–81 (NILILVVNLNHRGKMAIPDL). The chain crosses the membrane as a helical span at residues 82-102 (YFVNLAVADLILVADSLIEVF). The Extracellular segment spans residues 103–112 (NLNEKYYDYA). The chain crosses the membrane as a helical span at residues 113 to 133 (VLCTFMSLFLQVNMYSSIFFL). A disulfide bridge links C115 with C192. Topologically, residues 134 to 160 (TWMSFDRYIALANSMSSSPLRTMQHAK) are cytoplasmic. A helical membrane pass occupies residues 161–181 (LSCGLIWMASILATLLPFTIV). At 182-202 (QTQHRGEVHFCFANVFEIQWL) the chain is on the extracellular side. The chain crosses the membrane as a helical span at residues 203 to 223 (EVTIGFLVPFSIIGLCYSLIG). The Cytoplasmic portion of the chain corresponds to 224–245 (RILMRSQKHRGLWPRRQKALRM). The helical transmembrane segment at 246–266 (IVVVVLVFFICWLPENVFISI) threads the bilayer. The Extracellular segment spans residues 267 to 292 (QLLQGTADPSQRTATTLRHDYPLTGH). A helical membrane pass occupies residues 293–313 (IVNLAAFSNSCLNPIIYSFLG). The Cytoplasmic segment spans residues 314 to 353 (ETFRDKLRLFIKQKASWSVVNRFCHHGLDLHLPVRSEVSE).

Belongs to the G-protein coupled receptor 1 family. Homodimer. Heterodimer. In terms of tissue distribution, expressed in oocytes (at protein level). Highly expressed in brain, heart, testis and ovary. Weakly expressed in muscle and intestine.

It localises to the nucleus. The protein localises to the cytoplasm. It is found in the perinuclear region. Its subcellular location is the cytoskeleton. The protein resides in the cytoplasmic vesicle membrane. It localises to the cell membrane. The protein localises to the basolateral cell membrane. It is found in the endoplasmic reticulum membrane. Its subcellular location is the early endosome. The protein resides in the recycling endosome. It localises to the golgi apparatus. The protein localises to the trans-Golgi network. It is found in the golgi apparatus membrane. Its subcellular location is the cell projection. The protein resides in the dendrite. It localises to the dendritic spine membrane. The protein localises to the axon. It is found in the postsynaptic density. Its subcellular location is the mitochondrion membrane. Its function is as follows. Membrane G-protein coupled estrogen receptor that binds to 17-beta-estradiol (E2) with high affinity, leading to rapid and transient activation of numerous intracellular signaling pathways. Plays a role in the embryonic development of sensory and motor neurons. May induce apoptosis and reduce proliferation of brain cells. Involved in maintenance of meiotic arrest in oocytes. This is G-protein coupled estrogen receptor 1 (gper1) from Micropogonias undulatus (Atlantic croaker).